A 501-amino-acid chain; its full sequence is L-arabinose isomerase (501 aa).

The Mn(2+) site is built by Glu-306, Glu-333, His-350, and His-450.

This sequence belongs to the arabinose isomerase family. In terms of assembly, homohexamer. The cofactor is Mn(2+).

It carries out the reaction beta-L-arabinopyranose = L-ribulose. Its pathway is carbohydrate degradation; L-arabinose degradation via L-ribulose; D-xylulose 5-phosphate from L-arabinose (bacterial route): step 1/3. Catalyzes the conversion of L-arabinose to L-ribulose. This Serratia proteamaculans (strain 568) protein is L-arabinose isomerase.